Consider the following 290-residue polypeptide: Translin-associated protein X (290 aa).

The disordered stretch occupies residues 1–31; it reads MNGKEGPGGFRKRKHDTFPHNQRREGKDASL. Over residues 16 to 28 the composition is skewed to basic and acidic residues; the sequence is DTFPHNQRREGKD. The tract at residues 73 to 208 is interaction with C1D; the sequence is LLHRITSAPD…MRMCINSVGN (136 aa). Mg(2+) is bound by residues Glu-129 and Glu-197. Residue Lys-279 forms a Glycyl lysine isopeptide (Lys-Gly) (interchain with G-Cter in SUMO2) linkage.

Belongs to the translin family. In terms of assembly, ring-shaped heterooctamer of six TSN and two TSNAX subunits. Interacts with GOLGA3, TSNAXIP1, SUN1 and AKAP9. Interacts with the homodimeric form of C1D following gamma-radiation. Interacts with TSN and C1D in a mutually exclusive manner. In terms of processing, sumoylated with SUMO1. As to expression, detected in heart, brain, lung, liver, kidney and testis.

It is found in the cytoplasm. The protein localises to the perinuclear region. The protein resides in the golgi apparatus. Its subcellular location is the nucleus. Functionally, acts in combination with TSN as an endonuclease involved in the activation of the RNA-induced silencing complex (RISC). Possible role in spermatogenesis. This Mus musculus (Mouse) protein is Translin-associated protein X (Tsnax).